Here is a 625-residue protein sequence, read N- to C-terminus: ATP-dependent rRNA helicase spb4 (625 aa).

Positions 14-42 (WDALTPSLAEWILDAIKSMGFEKMTPVQA) match the Q motif motif. Residues 45-246 (IPLFMGNKDV…RVGLRNPVKI (202 aa)) enclose the Helicase ATP-binding domain. ATP is bound at residue 58-65 (AVTGSGKT). The DEAD box signature appears at 194 to 197 (DEAD). The 159-residue stretch at 278–436 (ALLSLLSQLQ…TTDDAAKILI (159 aa)) folds into the Helicase C-terminal domain. The interval 550-597 (KKQREAWSQKHEKQDLKELKREKKKRKREIERLDKMTDEEKRVEQEKE) is disordered. 2 stretches are compositionally biased toward basic and acidic residues: residues 553-570 (REAWSQKHEKQDLKELKR) and 577-597 (REIERLDKMTDEEKRVEQEKE). A coiled-coil region spans residues 557–614 (SQKHEKQDLKELKREKKKRKREIERLDKMTDEEKRVEQEKERELQALIEQVKRRKIED).

This sequence belongs to the DEAD box helicase family. DDX55/SPB4 subfamily. As to quaternary structure, component of pre-60S ribosomal complexes.

It is found in the nucleus. The protein resides in the nucleolus. It catalyses the reaction ATP + H2O = ADP + phosphate + H(+). Functionally, ATP-binding RNA helicase involved in the biogenesis of 60S ribosomal subunits. Binds 90S pre-ribosomal particles and dissociates from pre-60S ribosomal particles after processing of 27SB pre-rRNA. Required for the normal formation of 18S rRNA through the processing of pre-rRNAs at sites A0, A1 and A2, and the normal formation of 25S and 5.8S rRNAs through the processing of pre-rRNAs at sites C1 and C2. This Sclerotinia sclerotiorum (strain ATCC 18683 / 1980 / Ss-1) (White mold) protein is ATP-dependent rRNA helicase spb4.